The primary structure comprises 203 residues: NAD(P)H dehydrogenase (quinone) (203 aa).

Residues 3–194 (VLIAYYSMYG…AAARYQGKHV (192 aa)) enclose the Flavodoxin-like domain. Residues 9-14 (SMYGHI) and 82-84 (TRF) contribute to the FMN site. Tyr11 is a binding site for NAD(+). Trp102 is a substrate binding site. FMN contacts are provided by residues 117 to 123 (SSATQHG) and His138.

It belongs to the WrbA family. FMN is required as a cofactor.

The enzyme catalyses a quinone + NADH + H(+) = a quinol + NAD(+). It catalyses the reaction a quinone + NADPH + H(+) = a quinol + NADP(+). The chain is NAD(P)H dehydrogenase (quinone) from Geotalea uraniireducens (strain Rf4) (Geobacter uraniireducens).